We begin with the raw amino-acid sequence, 55 residues long: Large ribosomal subunit protein bL33 (55 aa).

Belongs to the bacterial ribosomal protein bL33 family.

In Rhodopseudomonas palustris (strain BisB18), this protein is Large ribosomal subunit protein bL33.